The chain runs to 528 residues: Dihydromonacolin L monooxygenase LovA (528 aa).

At 1 to 23 (MTVDALTQPHHLLSLAWNDTQQH) the chain is on the cytoplasmic side. A helical; Signal-anchor for type II membrane protein membrane pass occupies residues 24–44 (GSWFAPLVTTSAGLLCLLLYL). Residues 45–528 (CSSGRRSDLP…DEDIRLPGSL (484 aa)) lie on the Lumenal side of the membrane. Cys465 provides a ligand contact to heme.

Belongs to the cytochrome P450 family. Heme is required as a cofactor.

It is found in the membrane. It localises to the endoplasmic reticulum membrane. It catalyses the reaction dihydromonacolin L carboxylate + reduced [NADPH--hemoprotein reductase] + O2 = monacolin L carboxylate + oxidized [NADPH--hemoprotein reductase] + 2 H2O + H(+). It carries out the reaction monacolin L carboxylate + reduced [NADPH--hemoprotein reductase] + O2 = monacolin J carboxylate + oxidized [NADPH--hemoprotein reductase] + H2O + H(+). Its pathway is polyketide biosynthesis; lovastatin biosynthesis. In terms of biological role, dihydromonacolin L monooxygenase; part of the gene cluster that mediates the biosynthesis of lovastatin (also known as mevinolin, mevacor or monacolin K), a hypolipidemic inhibitor of (3S)-hydroxymethylglutaryl-coenzyme A (HMG-CoA) reductase (HMGR). The first step in the biosynthesis of lovastatin is the production of dihydromonacolin L acid by the lovastatin nonaketide synthase lovB and the trans-acting enoyl reductase lovC via condensation of one acetyl-CoA unit and 8 malonyl-CoA units. Dihydromonacolin L acid is released from lovB by the thioesterase lovG. Next, dihydromonacolin L acid is oxidized by the dihydromonacolin L monooxygenase lovA twice to form monacolin J acid. The 2-methylbutyrate moiety of lovastatin is synthesized by the lovastatin diketide synthase lovF via condensation of one acetyl-CoA unit and one malonyl-CoA unit. Finally, the covalent attachment of this moiety to monacolin J acid is catalyzed by the transesterase lovD to yield lovastatin. LovD has broad substrate specificity and can also convert monacolin J to simvastatin using alpha-dimethylbutanoyl-S-methyl-3-mercaptopropionate (DMB-S-MMP) as the thioester acyl donor, and can also catalyze the reverse reaction and function as hydrolase in vitro. LovD has much higher activity with LovF-bound 2-methylbutanoate than with free diketide substrates. The sequence is that of Dihydromonacolin L monooxygenase LovA from Aspergillus terreus.